Reading from the N-terminus, the 340-residue chain is Phospho-N-acetylmuramoyl-pentapeptide-transferase (340 aa).

10 consecutive transmembrane segments (helical) span residues 5–25 (FILS…HLIN), 50–70 (TPTM…IIWT), 73–93 (SNPY…IGFI), 113–133 (FSLL…IIND), 147–167 (IIFN…IGTS), 178–198 (GLAI…SFIS), 218–238 (LTII…FNTY), 242–262 (IFMG…ISVL), 267–287 (ILLI…IIQV), and 318–338 (IIRF…MLKV).

Belongs to the glycosyltransferase 4 family. MraY subfamily. Mg(2+) serves as cofactor.

The protein resides in the cell membrane. It carries out the reaction UDP-N-acetyl-alpha-D-muramoyl-L-alanyl-gamma-D-glutamyl-meso-2,6-diaminopimeloyl-D-alanyl-D-alanine + di-trans,octa-cis-undecaprenyl phosphate = di-trans,octa-cis-undecaprenyl diphospho-N-acetyl-alpha-D-muramoyl-L-alanyl-D-glutamyl-meso-2,6-diaminopimeloyl-D-alanyl-D-alanine + UMP. It participates in cell wall biogenesis; peptidoglycan biosynthesis. In terms of biological role, catalyzes the initial step of the lipid cycle reactions in the biosynthesis of the cell wall peptidoglycan: transfers peptidoglycan precursor phospho-MurNAc-pentapeptide from UDP-MurNAc-pentapeptide onto the lipid carrier undecaprenyl phosphate, yielding undecaprenyl-pyrophosphoryl-MurNAc-pentapeptide, known as lipid I. The protein is Phospho-N-acetylmuramoyl-pentapeptide-transferase of Buchnera aphidicola subsp. Baizongia pistaciae (strain Bp).